The chain runs to 249 residues: Exosome complex component Rrp4 (249 aa).

Positions glycine 72–lysine 143 constitute an S1 motif domain. A KH domain is found at proline 151–isoleucine 213.

The protein belongs to the RRP4 family. As to quaternary structure, component of the archaeal exosome complex. Forms a trimer of Rrp4 and/or Csl4 subunits. The trimer associates with a hexameric ring-like arrangement composed of 3 Rrp41-Rrp42 heterodimers.

It localises to the cytoplasm. Its function is as follows. Non-catalytic component of the exosome, which is a complex involved in RNA degradation. Increases the RNA binding and the efficiency of RNA degradation. Confers strong poly(A) specificity to the exosome. The sequence is that of Exosome complex component Rrp4 from Sulfolobus acidocaldarius (strain ATCC 33909 / DSM 639 / JCM 8929 / NBRC 15157 / NCIMB 11770).